We begin with the raw amino-acid sequence, 516 residues long: Bifunctional pantoate ligase/cytidylate kinase (516 aa).

The pantoate--beta-alanine ligase stretch occupies residues 1–279 (MVRKIFQTNA…CGSTRLIDHT (279 aa)). 29 to 36 (MGGLHPGH) lines the ATP pocket. The Proton donor role is filled by histidine 36. Glutamine 64 serves as a coordination point for (R)-pantoate. Glutamine 64 contacts beta-alanine. 153 to 156 (GEKD) is an ATP binding site. Glutamine 159 lines the (R)-pantoate pocket. ATP is bound at residue 190–193 (YSSR). Residues 280–516 (FLMHRKPIIA…PEEVWPTPNS (237 aa)) are cytidylate kinase.

The protein in the N-terminal section; belongs to the pantothenate synthetase family. In the C-terminal section; belongs to the cytidylate kinase family. Type 1 subfamily.

The protein resides in the cytoplasm. The catalysed reaction is (R)-pantoate + beta-alanine + ATP = (R)-pantothenate + AMP + diphosphate + H(+). The enzyme catalyses CMP + ATP = CDP + ADP. It carries out the reaction dCMP + ATP = dCDP + ADP. Its pathway is cofactor biosynthesis; (R)-pantothenate biosynthesis; (R)-pantothenate from (R)-pantoate and beta-alanine: step 1/1. Functionally, catalyzes the condensation of pantoate with beta-alanine in an ATP-dependent reaction via a pantoyl-adenylate intermediate. Its function is as follows. Catalyzes the transfer of a phosphate group from ATP to either CMP or dCMP to form CDP or dCDP and ADP, respectively. This is Bifunctional pantoate ligase/cytidylate kinase from Prochlorococcus marinus (strain NATL1A).